A 173-amino-acid chain; its full sequence is Crossover junction endodeoxyribonuclease RuvC (173 aa).

Active-site residues include aspartate 8, glutamate 67, and aspartate 139. Mg(2+) is bound by residues aspartate 8, glutamate 67, and aspartate 139.

It belongs to the RuvC family. As to quaternary structure, homodimer which binds Holliday junction (HJ) DNA. The HJ becomes 2-fold symmetrical on binding to RuvC with unstacked arms; it has a different conformation from HJ DNA in complex with RuvA. In the full resolvosome a probable DNA-RuvA(4)-RuvB(12)-RuvC(2) complex forms which resolves the HJ. Mg(2+) serves as cofactor.

The protein resides in the cytoplasm. It catalyses the reaction Endonucleolytic cleavage at a junction such as a reciprocal single-stranded crossover between two homologous DNA duplexes (Holliday junction).. Functionally, the RuvA-RuvB-RuvC complex processes Holliday junction (HJ) DNA during genetic recombination and DNA repair. Endonuclease that resolves HJ intermediates. Cleaves cruciform DNA by making single-stranded nicks across the HJ at symmetrical positions within the homologous arms, yielding a 5'-phosphate and a 3'-hydroxyl group; requires a central core of homology in the junction. The consensus cleavage sequence is 5'-(A/T)TT(C/G)-3'. Cleavage occurs on the 3'-side of the TT dinucleotide at the point of strand exchange. HJ branch migration catalyzed by RuvA-RuvB allows RuvC to scan DNA until it finds its consensus sequence, where it cleaves and resolves the cruciform DNA. This chain is Crossover junction endodeoxyribonuclease RuvC, found in Aeromonas salmonicida (strain A449).